The following is a 185-amino-acid chain: MGKKQNKKKVEEVLEEEEEEYVVEKVLDRRVVKGKVEYLLKWKGFSDEDNTWEPEENLDCPDLIAEFLQSQKTAHETDKSEGGKRKADSDSEDKGEESKPKKKKEESEKPRGFARGLEPERIIGATDSSGELMFLMKWKNSDEADLVPAKEANVKCPQVVISFYEERLTWHSYPSEDDDKKDDKN.

Residues lysine 9 and lysine 33 each participate in a glycyl lysine isopeptide (Lys-Gly) (interchain with G-Cter in SUMO2) cross-link. The Chromo 1 domain maps to 21 to 79 (YVVEKVLDRRVVKGKVEYLLKWKGFSDEDNTWEPEENLDCPDLIAEFLQSQKTAHETDK). The tract at residues 63–124 (LIAEFLQSQK…RGLEPERIIG (62 aa)) is disordered. The span at 73 to 89 (TAHETDKSEGGKRKADS) shows a compositional bias: basic and acidic residues. Serine 89 and serine 91 each carry phosphoserine. Positions 96-121 (EESKPKKKKEESEKPRGFARGLEPER) are enriched in basic and acidic residues. Residues lysine 99 and lysine 150 each participate in a glycyl lysine isopeptide (Lys-Gly) (interchain with G-Cter in SUMO2) cross-link. Residues 117–175 (LEPERIIGATDSSGELMFLMKWKNSDEADLVPAKEANVKCPQVVISFYEERLTWHSYPS) form the Chromo 2; shadow subtype domain. Residue serine 175 is modified to Phosphoserine.

Homodimer. Interacts directly with CHAF1A, EMSY, LBR, TIF1/TIF1A and TRIM28/TIF1B PXVXL motif via the chromoshadow domain. Interacts directly with histone H3 methylated at 'Lys-9' via the chromo domain. Interacts with SUV39H1 and SETDB1, KMT5B and KMT5C. Interacts with PRDM6. Interacts with POGZ. Interacts with CHAMP1. Interacts with INCENP. Interacts with SGO1; the CBX1 homodimer binds to one molecule of SGO1. Interacts with LRIF1 (via PxVxL motif). Interacts with HDGFL2. Interacts with CHD3. Interacts with CHD4. In terms of processing, not phosphorylated. Post-translationally, ubiquitinated. Expressed in all adult and embryonic tissues.

It localises to the nucleus. In terms of biological role, component of heterochromatin. Recognizes and binds histone H3 tails methylated at 'Lys-9', leading to epigenetic repression. Interaction with lamin B receptor (LBR) can contribute to the association of the heterochromatin with the inner nuclear membrane. The sequence is that of Chromobox protein homolog 1 (CBX1) from Homo sapiens (Human).